The following is a 111-amino-acid chain: NADH-ubiquinone oxidoreductase chain 3 (111 aa).

A run of 3 helical transmembrane segments spans residues 2 to 22 (ILIW…GMFV), 54 to 74 (FFVI…LLPM), and 82 to 102 (PTTY…FYEW).

This sequence belongs to the complex I subunit 3 family.

It is found in the mitochondrion membrane. The enzyme catalyses a ubiquinone + NADH + 5 H(+)(in) = a ubiquinol + NAD(+) + 4 H(+)(out). Its function is as follows. Core subunit of the mitochondrial membrane respiratory chain NADH dehydrogenase (Complex I) that is believed to belong to the minimal assembly required for catalysis. Complex I functions in the transfer of electrons from NADH to the respiratory chain. The immediate electron acceptor for the enzyme is believed to be ubiquinone. The chain is NADH-ubiquinone oxidoreductase chain 3 (ND3) from Artemia franciscana (Brine shrimp).